A 159-amino-acid polypeptide reads, in one-letter code: F1845 fimbrial protein (159 aa).

The N-terminal stretch at 1–21 (MKKLAIMAAASMIFTVGSAQA) is a signal peptide.

This sequence belongs to the Dr-adhesin family.

The protein resides in the fimbrium. Functionally, hemagglutinins of uropathogenic E.coli mediate adherence to the upper urinary tract. These adhesins bind to the Dr blood group antigen and also agglutinate human erythrocytes in the presence of D-mannose (mannose-resistant hemagglutination (MRHA)). C1845 is a strain responsible for diarrheal disease. The protein is F1845 fimbrial protein (daaE) of Escherichia coli.